Reading from the N-terminus, the 804-residue chain is Phenylalanine--tRNA ligase beta subunit (804 aa).

In terms of domain architecture, tRNA-binding spans 40 to 153 (PLPDLRVVVG…SSYAVGEPFA (114 aa)). In terms of domain architecture, B5 spans 400–476 (PALLVLPFRP…RLHGYDNIEA (77 aa)). Residues Asp454, Asp460, Glu463, and Glu464 each contribute to the Mg(2+) site. The region spanning 710-802 (SKFPAVQRDL…AESKLGAVIR (93 aa)) is the FDX-ACB domain.

This sequence belongs to the phenylalanyl-tRNA synthetase beta subunit family. Type 1 subfamily. Tetramer of two alpha and two beta subunits. Requires Mg(2+) as cofactor.

The protein localises to the cytoplasm. It catalyses the reaction tRNA(Phe) + L-phenylalanine + ATP = L-phenylalanyl-tRNA(Phe) + AMP + diphosphate + H(+). The chain is Phenylalanine--tRNA ligase beta subunit from Chlorobium luteolum (strain DSM 273 / BCRC 81028 / 2530) (Pelodictyon luteolum).